A 216-amino-acid chain; its full sequence is UPF0323 lipoprotein HPAG1_0235 (216 aa).

The first 27 residues, 1–27 (MKKPYRKISDYAIVGGLSALVMVSIVG), serve as a signal peptide directing secretion. Residue Cys-28 is the site of N-palmitoyl cysteine attachment. Cys-28 carries the S-diacylglycerol cysteine lipid modification. Polar residues predominate over residues 159–196 (QRTYKSPQAYQRSQNSFSKSAPSASGMGTASKGQSGFF). The interval 159–216 (QRTYKSPQAYQRSQNSFSKSAPSASGMGTASKGQSGFFGSSRPTSSPAVSSGTRGFNA) is disordered. Low complexity predominate over residues 198 to 209 (SSRPTSSPAVSS).

The protein belongs to the UPF0323 family.

It is found in the cell membrane. This Helicobacter pylori (strain HPAG1) protein is UPF0323 lipoprotein HPAG1_0235.